The following is a 533-amino-acid chain: Probable DNA ligase (533 aa).

ATP is bound at residue glutamate 211. Residue lysine 213 is the N6-AMP-lysine intermediate of the active site. The ATP site is built by arginine 218, arginine 233, glutamate 262, phenylalanine 302, arginine 374, and lysine 380. The segment at 512–533 is disordered; that stretch reads LAGEAAEKGQAEGGGEELEDDG.

It belongs to the ATP-dependent DNA ligase family. Requires Mg(2+) as cofactor.

It catalyses the reaction ATP + (deoxyribonucleotide)n-3'-hydroxyl + 5'-phospho-(deoxyribonucleotide)m = (deoxyribonucleotide)n+m + AMP + diphosphate.. DNA ligase that seals nicks in double-stranded DNA during DNA replication, DNA recombination and DNA repair. In Sorangium cellulosum (strain So ce56) (Polyangium cellulosum (strain So ce56)), this protein is Probable DNA ligase.